The primary structure comprises 259 residues: uncharacterized protein (259 aa).

A divalent metal cation contacts are provided by His9, His11, Glu97, His133, His157, and Asp207.

Belongs to the metallo-dependent hydrolases superfamily. TatD-type hydrolase family. The cofactor is a divalent metal cation.

This is an uncharacterized protein from Escherichia coli (strain K12).